The primary structure comprises 319 residues: Cytochrome c biogenesis protein CcsA (319 aa).

5 helical membrane-spanning segments follow: residues 14–34, 46–66, 74–94, 97–117, and 142–162; these read AFAVLFLTMLLYWCGAAFPQW, AIANLCITGLLAARWIEGGYF, SLFFLCWGLTAMHFVAESISG, LVGVVTAPVAMGITAFAALSL, and VMMLSYATLMVGSLLAIALLV. Positions 175-201 are disordered; that stretch reads SVGTGSFRSRRPEPSLEASTGNGGTTV. Residues 191-201 show a composition bias toward polar residues; it reads EASTGNGGTTV. A run of 3 helical transmembrane segments spans residues 227–247, 254–274, and 288–308; these read MIGLGFPLLTIGIISGAVWAN, WSWDPKETWALIVWLVYAAYL, and AILATVGFGVVWVCYLGVNLL.

The protein belongs to the CcmF/CycK/Ccl1/NrfE/CcsA family. May interact with ccs1.

Its subcellular location is the cellular thylakoid membrane. Its function is as follows. Required during biogenesis of c-type cytochromes (cytochrome c6 and cytochrome f) at the step of heme attachment. This chain is Cytochrome c biogenesis protein CcsA, found in Thermosynechococcus vestitus (strain NIES-2133 / IAM M-273 / BP-1).